The primary structure comprises 609 residues: UvrABC system protein C (609 aa).

The region spanning 16–94 is the GIY-YIG domain; that stretch reads SSAGVYRMYD…IKQYMPKYNV (79 aa). Residues 203–238 form the UVR domain; sequence QQVISTLVAKMEQAAQQQEYEQAARFRDQIMALRKV.

This sequence belongs to the UvrC family. In terms of assembly, interacts with UvrB in an incision complex.

It localises to the cytoplasm. In terms of biological role, the UvrABC repair system catalyzes the recognition and processing of DNA lesions. UvrC both incises the 5' and 3' sides of the lesion. The N-terminal half is responsible for the 3' incision and the C-terminal half is responsible for the 5' incision. The chain is UvrABC system protein C from Shewanella putrefaciens (strain CN-32 / ATCC BAA-453).